The primary structure comprises 138 residues: Putative pre-16S rRNA nuclease (138 aa).

This sequence belongs to the YqgF nuclease family.

It is found in the cytoplasm. Could be a nuclease involved in processing of the 5'-end of pre-16S rRNA. The protein is Putative pre-16S rRNA nuclease of Bacillus pumilus (strain SAFR-032).